The sequence spans 310 residues: MDFVAGAIGGVCGVAVGYPLDTVKVKIQTEAKYTSIWHCVRDTYRQERLWGFYRGLSLPVCTVSLVSSVSFGTYHHCLAHICRFRYGSTDVKPTKADITLSGCASGLVRVFLTSPTEVAKVRLQTQAQSQTQQRRPSASWTSVAPALCPAPTACLEPRPKYSGPLHCLVTVAREEGLRGLYKGSSALLLREGHSFATYFLSYAVLSEWLTPAGQSQPDVLGVLVAGGCAGVLAWAVATPMDVIKSRLQADGQGQQRYRGLLHCVVTSVREEGPRVLFKGLALNCCRAFPVNMVVFVAYEAVLRLTQGLLT.

Solcar repeat units lie at residues 1–80 (MDFV…CLAH), 93–208 (PTKA…LSEW), and 217–304 (PDVL…VLRL). 6 helical membrane-spanning segments follow: residues 3–23 (FVAG…LDTV), 49–69 (LWGF…VSSV), 98–116 (ITLS…TSPT), 192–212 (GHSF…LTPA), 219–239 (VLGV…VATP), and 275–295 (VLFK…MVVF).

Belongs to the mitochondrial carrier (TC 2.A.29) family.

It is found in the mitochondrion inner membrane. The protein localises to the mitochondrion outer membrane. The catalysed reaction is NAD(+)(in) = NAD(+)(out). It carries out the reaction acetyl-CoA(in) = acetyl-CoA(out). Its function is as follows. Mitochondrial NAD(+) transporter that acts as a 'metabolic gate' in hepatic lipogenesis. Provides NAD(+) substrate to mitochondrial SIRT3 deacetylase and enables its NAD(+)-dependent activities in mitochondrial energy metabolism. This triggers downstream activation of PRKAA1/AMPK-alpha signaling cascade that negatively regulates sterol regulatory element-binding protein (SREBP) transcriptional activities and ATP-consuming lipogenesis to restore cellular energy balance. May transport other mitochondrial metabolites having an aromatic nucleotide and phosphate groups, such as acetyl-CoA. Does not transport amino acids. The transport mechanism remains to be elucidated. The chain is Solute carrier family 25 member 47 from Rattus norvegicus (Rat).